Consider the following 284-residue polypeptide: Large ribosomal subunit protein uL2 (284 aa).

The interval 232 to 284 (RGTAMNPVDHPHGGGEGRHNGYIPRTPWGKVTKGLKTRDKRKSNKWIVKDRRK) is disordered. The segment covering 240-250 (DHPHGGGEGRH) has biased composition (basic and acidic residues). Basic residues predominate over residues 264–284 (KGLKTRDKRKSNKWIVKDRRK).

Belongs to the universal ribosomal protein uL2 family. In terms of assembly, part of the 50S ribosomal subunit. Forms a bridge to the 30S subunit in the 70S ribosome.

Functionally, one of the primary rRNA binding proteins. Required for association of the 30S and 50S subunits to form the 70S ribosome, for tRNA binding and peptide bond formation. It has been suggested to have peptidyltransferase activity; this is somewhat controversial. Makes several contacts with the 16S rRNA in the 70S ribosome. This Chlamydia felis (strain Fe/C-56) (Chlamydophila felis) protein is Large ribosomal subunit protein uL2.